A 312-amino-acid chain; its full sequence is MAAADELAFHEFEEATNLLAETPDAATTSQSDELTSREHVAVVVGSGIGYGAEVGEEEDDKTSLLQEEKPQPRFWTFDYYQSFFDVDTSQVLDRIKGSLLPHPGHNFVRHHLRNRPDLYGPFWICATLAFVLAVTGNLTLVLAQRRDPSIHYSPQFHKVTIAGITIYCYAWLVPLALWGFLRWRQGTRERMGLYTFLETVCVYGYSLFVFIPTVVLWLIPVQWIQWLFGALGLALSAAGLVFTLWPVVREDTRLVAAALLSTVVLLHALLALGCKLYFFQPLPLDHVVPAPQATPPSPNVLLPSSIQPMTTS.

At A2 the chain carries N-acetylalanine. The Cytoplasmic segment spans residues 2 to 121 (AAADELAFHE…LRNRPDLYGP (120 aa)). The helical transmembrane segment at 122–142 (FWICATLAFVLAVTGNLTLVL) threads the bilayer. Over 143-160 (AQRRDPSIHYSPQFHKVT) the chain is Lumenal. A helical transmembrane segment spans residues 161–181 (IAGITIYCYAWLVPLALWGFL). At 182–193 (RWRQGTRERMGL) the chain is on the cytoplasmic side. A helical membrane pass occupies residues 194–216 (YTFLETVCVYGYSLFVFIPTVVL). Topologically, residues 217-228 (WLIPVQWIQWLF) are lumenal. A helical transmembrane segment spans residues 229 to 249 (GALGLALSAAGLVFTLWPVVR). Residues 250–253 (EDTR) are Cytoplasmic-facing. Residues 254-274 (LVAAALLSTVVLLHALLALGC) traverse the membrane as a helical segment. Topologically, residues 275–312 (KLYFFQPLPLDHVVPAPQATPPSPNVLLPSSIQPMTTS) are lumenal.

This sequence belongs to the YIP1 family. In terms of assembly, interacts with YIPF6; this interaction may stabilize YIPF2. May also form a ternary complex with YIPF1 and YIPF6.

Its subcellular location is the golgi apparatus. The protein localises to the cis-Golgi network membrane. The protein resides in the trans-Golgi network membrane. It localises to the late endosome membrane. This is Protein YIPF2 (Yipf2) from Mus musculus (Mouse).